A 158-amino-acid chain; its full sequence is NADPH-dependent 7-cyano-7-deazaguanine reductase (158 aa).

The segment covering 1 to 13 (MAKRSNTTMTSAG) has biased composition (polar residues). The interval 1 to 37 (MAKRSNTTMTSAGLQLGREVAPPDSPETAKLDRVPNP) is disordered. Over residues 27–37 (ETAKLDRVPNP) the composition is skewed to basic and acidic residues. The active-site Thioimide intermediate is Cys56. Catalysis depends on Asp63, which acts as the Proton donor. Substrate-binding positions include 78-80 (VES) and 97-98 (HE).

Belongs to the GTP cyclohydrolase I family. QueF type 1 subfamily.

Its subcellular location is the cytoplasm. It carries out the reaction 7-aminomethyl-7-carbaguanine + 2 NADP(+) = 7-cyano-7-deazaguanine + 2 NADPH + 3 H(+). Its pathway is tRNA modification; tRNA-queuosine biosynthesis. Functionally, catalyzes the NADPH-dependent reduction of 7-cyano-7-deazaguanine (preQ0) to 7-aminomethyl-7-deazaguanine (preQ1). This Bradyrhizobium sp. (strain ORS 278) protein is NADPH-dependent 7-cyano-7-deazaguanine reductase.